Here is a 406-residue protein sequence, read N- to C-terminus: Succinyl-diaminopimelate desuccinylase (406 aa).

His-95 provides a ligand contact to Zn(2+). Residue Asp-97 is part of the active site. Residue Asp-128 participates in Zn(2+) binding. Glu-162 (proton acceptor) is an active-site residue. 3 residues coordinate Zn(2+): Glu-163, Glu-191, and His-377.

This sequence belongs to the peptidase M20A family. DapE subfamily. Homodimer. Zn(2+) is required as a cofactor. The cofactor is Co(2+).

It carries out the reaction N-succinyl-(2S,6S)-2,6-diaminopimelate + H2O = (2S,6S)-2,6-diaminopimelate + succinate. Its pathway is amino-acid biosynthesis; L-lysine biosynthesis via DAP pathway; LL-2,6-diaminopimelate from (S)-tetrahydrodipicolinate (succinylase route): step 3/3. Its function is as follows. Catalyzes the hydrolysis of N-succinyl-L,L-diaminopimelic acid (SDAP), forming succinate and LL-2,6-diaminopimelate (DAP), an intermediate involved in the bacterial biosynthesis of lysine and meso-diaminopimelic acid, an essential component of bacterial cell walls. This chain is Succinyl-diaminopimelate desuccinylase, found in Polaromonas naphthalenivorans (strain CJ2).